A 208-amino-acid polypeptide reads, in one-letter code: Ribosomal RNA large subunit methyltransferase E (208 aa).

The S-adenosyl-L-methionine site is built by G62, W64, D82, D98, and D123. The active-site Proton acceptor is the K163.

Belongs to the class I-like SAM-binding methyltransferase superfamily. RNA methyltransferase RlmE family.

It is found in the cytoplasm. It carries out the reaction uridine(2552) in 23S rRNA + S-adenosyl-L-methionine = 2'-O-methyluridine(2552) in 23S rRNA + S-adenosyl-L-homocysteine + H(+). Its function is as follows. Specifically methylates the uridine in position 2552 of 23S rRNA at the 2'-O position of the ribose in the fully assembled 50S ribosomal subunit. This is Ribosomal RNA large subunit methyltransferase E from Glaesserella parasuis serovar 5 (strain SH0165) (Haemophilus parasuis).